Here is an 846-residue protein sequence, read N- to C-terminus: Iron-sulfur cluster assembly SufBD family protein Mb1496 (846 aa).

Residues 1-20 (MTLTPEASKSVAQPPTQAPL) are disordered. One can recognise a DOD-type homing endonuclease domain in the interval 388–528 (LAGYYLAEGH…LQSILARLGH (141 aa)).

The protein belongs to the iron-sulfur cluster assembly SufBD family. This protein undergoes a protein self splicing that involves a post-translational excision of the intervening region (intein) followed by peptide ligation.

This chain is Iron-sulfur cluster assembly SufBD family protein Mb1496, found in Mycobacterium bovis (strain ATCC BAA-935 / AF2122/97).